Here is a 501-residue protein sequence, read N- to C-terminus: Ribose import ATP-binding protein RbsA (501 aa).

ABC transporter domains lie at 5–241 (LQLQ…VGRK) and 252–495 (APGE…VGKQ). 37–44 (GENGAGKS) provides a ligand contact to ATP.

This sequence belongs to the ABC transporter superfamily. Ribose importer (TC 3.A.1.2.1) family. In terms of assembly, the complex is composed of an ATP-binding protein (RbsA), two transmembrane proteins (RbsC) and a solute-binding protein (RbsB).

Its subcellular location is the cell inner membrane. The catalysed reaction is D-ribose(out) + ATP + H2O = D-ribose(in) + ADP + phosphate + H(+). Functionally, part of the ABC transporter complex RbsABC involved in ribose import. Responsible for energy coupling to the transport system. The chain is Ribose import ATP-binding protein RbsA from Pectobacterium atrosepticum (strain SCRI 1043 / ATCC BAA-672) (Erwinia carotovora subsp. atroseptica).